Reading from the N-terminus, the 92-residue chain is Precursor of CEP12 (92 aa).

The signal sequence occupies residues 1–30 (MVNRDNSIVALSFFMLFLLVLHLHFETTTA). Positions 31-70 (ARKPVRVFGPPSSIEWSPPSPPKDDFEWFEINIYKNIEQT) are excised as a propeptide. Residues 70–92 (TAFRPTGQGPSQGIGHKDPPGAP) are disordered. 2 positions are modified to hydroxyproline: P74 and P79. The propeptide occupies 86–92 (KDPPGAP).

It belongs to the C-terminally encoded plant signaling peptide (CEP) family. As to quaternary structure, interacts with CEP receptors (e.g. CEPR1 and CEPR2). The mature small signaling peptide is generated by proteolytic processing of the longer precursor.

It is found in the secreted. The protein localises to the extracellular space. Its subcellular location is the apoplast. Functionally, extracellular signaling peptide that may regulate primary root growth rate and systemic nitrogen (N)-demand signaling. This chain is Precursor of CEP12, found in Arabidopsis thaliana (Mouse-ear cress).